A 426-amino-acid polypeptide reads, in one-letter code: Tol-Pal system protein TolB (426 aa).

A signal peptide spans methionine 1–alanine 25.

It belongs to the TolB family. As to quaternary structure, the Tol-Pal system is composed of five core proteins: the inner membrane proteins TolA, TolQ and TolR, the periplasmic protein TolB and the outer membrane protein Pal. They form a network linking the inner and outer membranes and the peptidoglycan layer.

The protein resides in the periplasm. Functionally, part of the Tol-Pal system, which plays a role in outer membrane invagination during cell division and is important for maintaining outer membrane integrity. The sequence is that of Tol-Pal system protein TolB from Aromatoleum aromaticum (strain DSM 19018 / LMG 30748 / EbN1) (Azoarcus sp. (strain EbN1)).